A 128-amino-acid polypeptide reads, in one-letter code: MSNVPADLKYASSHEWVRADGDGVYSVGITEHAQELLGDMVFVDLPEVGSEVSAGSDCAVAESVKAASDIYAPISGEIIAVNAELESSPELVNSAPYTDGWLFSIKASDESELDSLLDAEAYLATIEE.

In terms of domain architecture, Lipoyl-binding spans 24-106 (VYSVGITEHA…YTDGWLFSIK (83 aa)). The residue at position 65 (K65) is an N6-lipoyllysine.

The protein belongs to the GcvH family. In terms of assembly, the glycine cleavage system is composed of four proteins: P, T, L and H. The cofactor is (R)-lipoate.

Its function is as follows. The glycine cleavage system catalyzes the degradation of glycine. The H protein shuttles the methylamine group of glycine from the P protein to the T protein. The sequence is that of Glycine cleavage system H protein from Yersinia enterocolitica serotype O:8 / biotype 1B (strain NCTC 13174 / 8081).